Here is an 86-residue protein sequence, read N- to C-terminus: Toxin Aam2 (86 aa).

The signal sequence occupies residues 1-20 (MNYLITISLALLLMTGVASG). The LCN-type CS-alpha/beta domain maps to 22–84 (RDGYIADAGN…VPIKVPGKCN (63 aa)). 4 cysteine pairs are disulfide-bonded: C32–C83, C36–C56, C42–C66, and C46–C68. N84 is modified (asparagine amide).

The protein belongs to the long (4 C-C) scorpion toxin superfamily. Sodium channel inhibitor family. Alpha subfamily. In terms of tissue distribution, expressed by the venom gland.

It is found in the secreted. Functionally, alpha toxins bind voltage-independently at site-3 of sodium channels (Nav) and inhibit the inactivation of the activated channels, thereby blocking neuronal transmission. This Androctonus amoreuxi (African fattail scorpion) protein is Toxin Aam2.